Consider the following 132-residue polypeptide: Fibroblast growth factor 1 (132 aa).

Heparin contacts are provided by residues Asn-10 and Lys-108–Lys-120.

The protein belongs to the heparin-binding growth factors family.

It is found in the secreted. Its subcellular location is the cytoplasm. It localises to the cell cortex. The protein localises to the cytosol. The protein resides in the nucleus. Plays an important role in the regulation of cell survival, cell division, angiogenesis, cell differentiation and cell migration. Functions as a potent mitogen in vitro. Acts as a ligand for FGFR1 and integrins. Binds to FGFR1 in the presence of heparin leading to FGFR1 dimerization and activation via sequential autophosphorylation on tyrosine residues which act as docking sites for interacting proteins, leading to the activation of several signaling cascades. Binds to integrins. Its binding to integrins and subsequent ternary complex formation with integrins and FGFR1 are essential for FGF1 signaling. The chain is Fibroblast growth factor 1 (fgf1) from Notophthalmus viridescens (Eastern newt).